An 800-amino-acid polypeptide reads, in one-letter code: Kolavenyl diphosphate synthase TPS5, chloroplastic (800 aa).

The N-terminal 75 residues, M1–D75, are a transit peptide targeting the chloroplast. A substrate-binding site is contributed by K244. Mg(2+)-binding residues include D375 and D377. The DXDD motif motif lies at D375 to D378. K461 is a substrate binding site.

Belongs to the terpene synthase family. The cofactor is Mg(2+). As to expression, mostly expressed in trichomes of leaves and fruits.

It is found in the plastid. It localises to the chloroplast. The catalysed reaction is (2E,6E,10E)-geranylgeranyl diphosphate = (+)-kolavenyl diphosphate. Its pathway is secondary metabolite biosynthesis; terpenoid biosynthesis. Involved in the biosynthesis of labdane-type diterpenoid including cleroda-dienols, and peregrinol lactones and furan derivatives, dopaminergic diterpenoids that can bind to dopamine receptors in the human pituitary gland, have probably ability to lower prolactin levels, and are used to treat menstrual cycle disorders (e.g. premenstrual syndrome and mastodynia). Terpene synthase that produces kolavenyl diphosphate from geranylgeranyl diphosphate (GGPP). This chain is Kolavenyl diphosphate synthase TPS5, chloroplastic, found in Vitex agnus-castus (Chaste tree).